The sequence spans 483 residues: Proline--tRNA ligase (483 aa).

The protein belongs to the class-II aminoacyl-tRNA synthetase family. ProS type 3 subfamily. Homodimer.

It localises to the cytoplasm. The catalysed reaction is tRNA(Pro) + L-proline + ATP = L-prolyl-tRNA(Pro) + AMP + diphosphate. Its function is as follows. Catalyzes the attachment of proline to tRNA(Pro) in a two-step reaction: proline is first activated by ATP to form Pro-AMP and then transferred to the acceptor end of tRNA(Pro). The polypeptide is Proline--tRNA ligase (Sulfurisphaera tokodaii (strain DSM 16993 / JCM 10545 / NBRC 100140 / 7) (Sulfolobus tokodaii)).